Reading from the N-terminus, the 232-residue chain is Large ribosomal subunit protein uL1 (232 aa).

It belongs to the universal ribosomal protein uL1 family. As to quaternary structure, part of the 50S ribosomal subunit.

Binds directly to 23S rRNA. The L1 stalk is quite mobile in the ribosome, and is involved in E site tRNA release. Functionally, protein L1 is also a translational repressor protein, it controls the translation of the L11 operon by binding to its mRNA. The polypeptide is Large ribosomal subunit protein uL1 (Azobacteroides pseudotrichonymphae genomovar. CFP2).